The sequence spans 329 residues: GTP 3',8-cyclase (329 aa).

A Radical SAM core domain is found at 8 to 234; the sequence is AFARKFYYLR…QLRQRSDGPA (227 aa). Position 17 (Arg-17) interacts with GTP. [4Fe-4S] cluster-binding residues include Cys-24 and Cys-28. Tyr-30 contributes to the S-adenosyl-L-methionine binding site. Residue Cys-31 coordinates [4Fe-4S] cluster. Arg-68 is a GTP binding site. Residue Gly-72 participates in S-adenosyl-L-methionine binding. Thr-99 contacts GTP. Ser-123 is a binding site for S-adenosyl-L-methionine. Lys-160 contributes to the GTP binding site. Met-194 provides a ligand contact to S-adenosyl-L-methionine. Residues Cys-257 and Cys-260 each coordinate [4Fe-4S] cluster. Residue 262 to 264 coordinates GTP; it reads RLR. Cys-274 contributes to the [4Fe-4S] cluster binding site.

Belongs to the radical SAM superfamily. MoaA family. Monomer and homodimer. [4Fe-4S] cluster is required as a cofactor.

It carries out the reaction GTP + AH2 + S-adenosyl-L-methionine = (8S)-3',8-cyclo-7,8-dihydroguanosine 5'-triphosphate + 5'-deoxyadenosine + L-methionine + A + H(+). The protein operates within cofactor biosynthesis; molybdopterin biosynthesis. Its function is as follows. Catalyzes the cyclization of GTP to (8S)-3',8-cyclo-7,8-dihydroguanosine 5'-triphosphate. The protein is GTP 3',8-cyclase of Shigella boydii serotype 18 (strain CDC 3083-94 / BS512).